Consider the following 138-residue polypeptide: Large ribosomal subunit protein uL16 (138 aa).

Residues 1 to 13 (MLQPARRKYRKEQ) show a composition bias toward basic residues. Residues 1–22 (MLQPARRKYRKEQKGRNTGIAT) form a disordered region.

This sequence belongs to the universal ribosomal protein uL16 family. As to quaternary structure, part of the 50S ribosomal subunit.

Binds 23S rRNA and is also seen to make contacts with the A and possibly P site tRNAs. In Delftia acidovorans (strain DSM 14801 / SPH-1), this protein is Large ribosomal subunit protein uL16.